A 545-amino-acid polypeptide reads, in one-letter code: Membrane protein insertase YidC (545 aa).

The next 4 membrane-spanning stretches (helical) occupy residues 350–370, 424–444, 461–481, and 498–518; these read IIGN…AVLY, LPML…FASV, ADPY…QTYL, and PLVF…YWVV.

It belongs to the OXA1/ALB3/YidC family. Type 1 subfamily. Interacts with the Sec translocase complex via SecD. Specifically interacts with transmembrane segments of nascent integral membrane proteins during membrane integration.

It is found in the cell inner membrane. Its function is as follows. Required for the insertion and/or proper folding and/or complex formation of integral membrane proteins into the membrane. Involved in integration of membrane proteins that insert both dependently and independently of the Sec translocase complex, as well as at least some lipoproteins. Aids folding of multispanning membrane proteins. The polypeptide is Membrane protein insertase YidC (Neisseria gonorrhoeae (strain NCCP11945)).